Here is a 374-residue protein sequence, read N- to C-terminus: tRNA-specific 2-thiouridylase MnmA (374 aa).

Residues 12–19 and Met38 each bind ATP; that span reads GMSGGVDS. Residues 98-100 form an interaction with target base in tRNA region; it reads NPD. Residue Cys103 is the Nucleophile of the active site. Cys103 and Cys202 form a disulfide bridge. Gly128 lines the ATP pocket. The tract at residues 152–154 is interaction with tRNA; that stretch reads KDQ. Residue Cys202 is the Cysteine persulfide intermediate of the active site. Residues 316–317 are interaction with tRNA; it reads RY.

The protein belongs to the MnmA/TRMU family.

It is found in the cytoplasm. It catalyses the reaction S-sulfanyl-L-cysteinyl-[protein] + uridine(34) in tRNA + AH2 + ATP = 2-thiouridine(34) in tRNA + L-cysteinyl-[protein] + A + AMP + diphosphate + H(+). Its function is as follows. Catalyzes the 2-thiolation of uridine at the wobble position (U34) of tRNA, leading to the formation of s(2)U34. This is tRNA-specific 2-thiouridylase MnmA from Vibrio vulnificus (strain CMCP6).